A 364-amino-acid polypeptide reads, in one-letter code: 3-isopropylmalate dehydrogenase (364 aa).

Residue 78-91 (GKKWDNFPIEERPE) participates in NAD(+) binding. Residues Arg-99, Arg-109, Arg-138, and Asp-228 each contribute to the substrate site. Residues Asp-228, Asp-252, and Asp-256 each contribute to the Mg(2+) site. 286 to 298 (GSAPDIAGKNIAN) serves as a coordination point for NAD(+).

Belongs to the isocitrate and isopropylmalate dehydrogenases family. LeuB type 1 subfamily. As to quaternary structure, homodimer. It depends on Mg(2+) as a cofactor. Mn(2+) serves as cofactor.

It localises to the cytoplasm. The enzyme catalyses (2R,3S)-3-isopropylmalate + NAD(+) = 4-methyl-2-oxopentanoate + CO2 + NADH. It participates in amino-acid biosynthesis; L-leucine biosynthesis; L-leucine from 3-methyl-2-oxobutanoate: step 3/4. Functionally, catalyzes the oxidation of 3-carboxy-2-hydroxy-4-methylpentanoate (3-isopropylmalate) to 3-carboxy-4-methyl-2-oxopentanoate. The product decarboxylates to 4-methyl-2 oxopentanoate. In Buchnera aphidicola subsp. Uroleucon obscurum, this protein is 3-isopropylmalate dehydrogenase.